We begin with the raw amino-acid sequence, 337 residues long: Dihydroorotate dehydrogenase (quinone) (337 aa).

FMN is bound by residues 58 to 62 (AGLDK) and T82. K62 is a substrate binding site. Substrate is bound at residue 107-111 (NCMGF). N137 and N170 together coordinate FMN. N170 lines the substrate pocket. Residue S173 is the Nucleophile of the active site. N175 contacts substrate. FMN-binding residues include K215 and T243. 244–245 (NT) contributes to the substrate binding site. FMN is bound by residues G266, G294, and 315–316 (YS).

It belongs to the dihydroorotate dehydrogenase family. Type 2 subfamily. In terms of assembly, monomer. FMN is required as a cofactor.

The protein resides in the cell membrane. It carries out the reaction (S)-dihydroorotate + a quinone = orotate + a quinol. Its pathway is pyrimidine metabolism; UMP biosynthesis via de novo pathway; orotate from (S)-dihydroorotate (quinone route): step 1/1. Catalyzes the conversion of dihydroorotate to orotate with quinone as electron acceptor. The polypeptide is Dihydroorotate dehydrogenase (quinone) (Dichelobacter nodosus (strain VCS1703A)).